Reading from the N-terminus, the 113-residue chain is Major basic nuclear protein 1 (113 aa).

The segment at 1 to 20 is disordered; sequence MAPKMKAAMKAMKAPAMKGK.

The protein resides in the nucleus. The chain is Major basic nuclear protein 1 (HCc1) from Crypthecodinium cohnii (Dinoflagellate).